The sequence spans 500 residues: Probable malate:quinone oxidoreductase (500 aa).

This sequence belongs to the MQO family. FAD serves as cofactor.

It carries out the reaction (S)-malate + a quinone = a quinol + oxaloacetate. It functions in the pathway carbohydrate metabolism; tricarboxylic acid cycle; oxaloacetate from (S)-malate (quinone route): step 1/1. The sequence is that of Probable malate:quinone oxidoreductase from Corynebacterium glutamicum (strain R).